Reading from the N-terminus, the 34-residue chain is Protein MgtT (34 aa).

The tract at residues M1–R34 is disordered. Over residues D24–R34 the composition is skewed to basic and acidic residues.

The protein is Protein MgtT of Escherichia coli (strain K12).